A 68-amino-acid chain; its full sequence is Small ribosomal subunit protein bS21 (68 aa).

It belongs to the bacterial ribosomal protein bS21 family.

The sequence is that of Small ribosomal subunit protein bS21 from Cereibacter sphaeroides (strain ATCC 17029 / ATH 2.4.9) (Rhodobacter sphaeroides).